We begin with the raw amino-acid sequence, 185 residues long: MLKPSRTHLTLRHEPHWIPAGLIHRLKSPRQLHDWLLDSSSLTAKIRIGCPEMDVRILSETYEKPLISEAHHLKIPLSQKTWIRCVFLMCNGQPIVYARTVIPYWKTGNPWYALKHLGNRPLGEVLFQLPNLKRTPFQITQTHAQNWPHLDLEDSKQIKTFARKSTFIQGKYPLLLTEAFIESSL.

Residues Arg-84, Leu-122, and Glu-178 each contribute to the substrate site.

It belongs to the UbiC family.

It localises to the cytoplasm. The enzyme catalyses chorismate = 4-hydroxybenzoate + pyruvate. It functions in the pathway cofactor biosynthesis; ubiquinone biosynthesis. Removes the pyruvyl group from chorismate, with concomitant aromatization of the ring, to provide 4-hydroxybenzoate (4HB) for the ubiquinone pathway. The chain is Probable chorismate pyruvate-lyase from Hydrogenovibrio crunogenus (strain DSM 25203 / XCL-2) (Thiomicrospira crunogena).